We begin with the raw amino-acid sequence, 302 residues long: Aspartate carbamoyltransferase catalytic subunit (302 aa).

Positions 53 and 54 each coordinate carbamoyl phosphate. Lysine 82 contacts L-aspartate. Positions 103, 131, and 134 each coordinate carbamoyl phosphate. L-aspartate contacts are provided by arginine 164 and arginine 223. Positions 260 and 261 each coordinate carbamoyl phosphate.

This sequence belongs to the aspartate/ornithine carbamoyltransferase superfamily. ATCase family. Heterooligomer of catalytic and regulatory chains.

The enzyme catalyses carbamoyl phosphate + L-aspartate = N-carbamoyl-L-aspartate + phosphate + H(+). It participates in pyrimidine metabolism; UMP biosynthesis via de novo pathway; (S)-dihydroorotate from bicarbonate: step 2/3. In terms of biological role, catalyzes the condensation of carbamoyl phosphate and aspartate to form carbamoyl aspartate and inorganic phosphate, the committed step in the de novo pyrimidine nucleotide biosynthesis pathway. This chain is Aspartate carbamoyltransferase catalytic subunit, found in Methanococcus maripaludis (strain C7 / ATCC BAA-1331).